The following is a 214-amino-acid chain: Putative germin-like protein 9-2 (214 aa).

Positions 1 to 25 (MALSYYSLLLLLLAVWAPALTLVMA) are cleaved as a signal peptide. Asn-44 and Asn-60 each carry an N-linked (GlcNAc...) asparagine glycan. The region spanning 56 to 202 (RKVFNTSSAP…SFKTDVPTIL (147 aa)) is the Cupin type-1 domain. Mn(2+)-binding residues include His-104, His-106, Glu-111, and His-150.

This sequence belongs to the germin family. As to quaternary structure, oligomer (believed to be a pentamer but probably hexamer).

It localises to the secreted. Its subcellular location is the extracellular space. The protein localises to the apoplast. May play a role in plant defense. Probably has no oxalate oxidase activity even if the active site is conserved. This chain is Putative germin-like protein 9-2, found in Oryza sativa subsp. japonica (Rice).